The chain runs to 371 residues: Mannonate dehydratase (371 aa).

This sequence belongs to the mannonate dehydratase family. The cofactor is Fe(2+). Mn(2+) serves as cofactor.

The enzyme catalyses D-mannonate = 2-dehydro-3-deoxy-D-gluconate + H2O. The protein operates within carbohydrate metabolism; pentose and glucuronate interconversion. Functionally, catalyzes the dehydration of D-mannonate. The polypeptide is Mannonate dehydratase (Geobacillus thermodenitrificans (strain NG80-2)).